The following is a 480-amino-acid chain: 3,6-anhydro-alpha-L-galactose dehydrogenase (480 aa).

NADP(+) contacts are provided by residues 149–150 (WN), 173–176 (KPTS), and 226–227 (GS). Glu248 acts as the Proton acceptor in catalysis. Leu249 is a binding site for NADP(+). Catalysis depends on Cys282, which acts as the Nucleophile. Residue Glu383 participates in NADP(+) binding.

The protein belongs to the aldehyde dehydrogenase family.

It carries out the reaction 3,6-anhydro-alpha-L-galactopyranose + NADP(+) + H2O = 3,6-anhydro-L-galactonate + NADPH + 2 H(+). The enzyme catalyses 3,6-anhydro-alpha-L-galactopyranose + NAD(+) + H2O = 3,6-anhydro-L-galactonate + NADH + 2 H(+). Its function is as follows. Involved in the degradation of 3,6-anhydro-L-galactose, which is the major monomeric sugar of red macroalgae. Catalyzes the oxidation of 3,6-anhydro-L-galactose (AHG) to form 3,6-anhydrogalactonate (AHGA). The chain is 3,6-anhydro-alpha-L-galactose dehydrogenase from Vibrio sp. (strain EJY3).